A 344-amino-acid polypeptide reads, in one-letter code: Protein MENT (344 aa).

An N-terminal signal peptide occupies residues 1–22 (MVPAACMLLWALLLSLESRAAG). Residues 162–182 (DMRSPSSKTTVDLSSETTLQQ) show a composition bias toward polar residues. Residues 162–197 (DMRSPSSKTTVDLSSETTLQQWSTPGSTPSPWPKPS) are disordered.

In terms of processing, phosphorylation sites are present in the extracellular medium.

The protein localises to the secreted. Its function is as follows. Involved in control of cellular proliferation. Onconcogenic modifier contributing to the tumor suppressor function of DNMT3B. This chain is Protein MENT (Ment), found in Rattus norvegicus (Rat).